The sequence spans 31 residues: Photosystem II reaction center protein T (31 aa).

The helical transmembrane segment at 3 to 23 (ALVYTFLLVGTLGIIFFAIFF) threads the bilayer.

It belongs to the PsbT family. As to quaternary structure, PSII is composed of 1 copy each of membrane proteins PsbA, PsbB, PsbC, PsbD, PsbE, PsbF, PsbH, PsbI, PsbJ, PsbK, PsbL, PsbM, PsbT, PsbY, PsbZ, Psb30/Ycf12, at least 3 peripheral proteins of the oxygen-evolving complex and a large number of cofactors. It forms dimeric complexes.

Its subcellular location is the plastid. It localises to the chloroplast thylakoid membrane. In terms of biological role, found at the monomer-monomer interface of the photosystem II (PS II) dimer, plays a role in assembly and dimerization of PSII. PSII is a light-driven water plastoquinone oxidoreductase, using light energy to abstract electrons from H(2)O, generating a proton gradient subsequently used for ATP formation. The sequence is that of Photosystem II reaction center protein T from Mesostigma viride (Green alga).